The sequence spans 795 residues: Protein translocase subunit SecA 2 (795 aa).

ATP-binding positions include Q84, 102–106 (GEGKT), and D496.

The protein belongs to the SecA family. In terms of assembly, monomer and homodimer. Part of the essential Sec protein translocation apparatus which comprises SecA, SecYEG and auxiliary proteins SecDF. Other proteins may also be involved.

Its subcellular location is the cell membrane. It localises to the cytoplasm. It carries out the reaction ATP + H2O + cellular proteinSide 1 = ADP + phosphate + cellular proteinSide 2.. Its function is as follows. Part of the Sec protein translocase complex. Interacts with the SecYEG preprotein conducting channel. Has a central role in coupling the hydrolysis of ATP to the transfer of proteins into and across the cell membrane, serving as an ATP-driven molecular motor driving the stepwise translocation of polypeptide chains across the membrane. The chain is Protein translocase subunit SecA 2 from Streptococcus agalactiae serotype III (strain NEM316).